We begin with the raw amino-acid sequence, 144 residues long: 3-hydroxyacyl-[acyl-carrier-protein] dehydratase FabZ (144 aa).

The active site involves His52.

It belongs to the thioester dehydratase family. FabZ subfamily.

It localises to the cytoplasm. It carries out the reaction a (3R)-hydroxyacyl-[ACP] = a (2E)-enoyl-[ACP] + H2O. Functionally, involved in unsaturated fatty acids biosynthesis. Catalyzes the dehydration of short chain beta-hydroxyacyl-ACPs and long chain saturated and unsaturated beta-hydroxyacyl-ACPs. The sequence is that of 3-hydroxyacyl-[acyl-carrier-protein] dehydratase FabZ from Syntrophomonas wolfei subsp. wolfei (strain DSM 2245B / Goettingen).